Reading from the N-terminus, the 293-residue chain is 4-hydroxy-3-methylbut-2-enyl diphosphate reductase (293 aa).

C12 contacts [4Fe-4S] cluster. H40 and H74 together coordinate (2E)-4-hydroxy-3-methylbut-2-enyl diphosphate. Positions 40 and 74 each coordinate dimethylallyl diphosphate. The isopentenyl diphosphate site is built by H40 and H74. Residue C96 participates in [4Fe-4S] cluster binding. H128 contributes to the (2E)-4-hydroxy-3-methylbut-2-enyl diphosphate binding site. Residue H128 participates in dimethylallyl diphosphate binding. H128 serves as a coordination point for isopentenyl diphosphate. E130 serves as the catalytic Proton donor. T166 contributes to the (2E)-4-hydroxy-3-methylbut-2-enyl diphosphate binding site. Residue C202 participates in [4Fe-4S] cluster binding. The (2E)-4-hydroxy-3-methylbut-2-enyl diphosphate site is built by S230, S231, N232, and S274. Positions 230, 231, 232, and 274 each coordinate dimethylallyl diphosphate. Positions 230, 231, 232, and 274 each coordinate isopentenyl diphosphate.

This sequence belongs to the IspH family. [4Fe-4S] cluster serves as cofactor.

The enzyme catalyses isopentenyl diphosphate + 2 oxidized [2Fe-2S]-[ferredoxin] + H2O = (2E)-4-hydroxy-3-methylbut-2-enyl diphosphate + 2 reduced [2Fe-2S]-[ferredoxin] + 2 H(+). The catalysed reaction is dimethylallyl diphosphate + 2 oxidized [2Fe-2S]-[ferredoxin] + H2O = (2E)-4-hydroxy-3-methylbut-2-enyl diphosphate + 2 reduced [2Fe-2S]-[ferredoxin] + 2 H(+). The protein operates within isoprenoid biosynthesis; dimethylallyl diphosphate biosynthesis; dimethylallyl diphosphate from (2E)-4-hydroxy-3-methylbutenyl diphosphate: step 1/1. It participates in isoprenoid biosynthesis; isopentenyl diphosphate biosynthesis via DXP pathway; isopentenyl diphosphate from 1-deoxy-D-xylulose 5-phosphate: step 6/6. Its function is as follows. Catalyzes the conversion of 1-hydroxy-2-methyl-2-(E)-butenyl 4-diphosphate (HMBPP) into a mixture of isopentenyl diphosphate (IPP) and dimethylallyl diphosphate (DMAPP). Acts in the terminal step of the DOXP/MEP pathway for isoprenoid precursor biosynthesis. The protein is 4-hydroxy-3-methylbut-2-enyl diphosphate reductase of Cytophaga hutchinsonii (strain ATCC 33406 / DSM 1761 / CIP 103989 / NBRC 15051 / NCIMB 9469 / D465).